The following is a 566-amino-acid chain: Erythroid membrane-associated protein (566 aa).

Positions 1-29 (MERPSPCGSWLVGCLFTIAVFQPPVQVLG) are cleaved as a signal peptide. Residues 30 to 139 (DAGKVYIAPL…SSREDNVTLQ (110 aa)) enclose the Ig-like V-type domain. The Extracellular segment spans residues 30-246 (DAGKVYIAPL…PERGSLSSPA (217 aa)). Cysteine 47 and cysteine 123 form a disulfide bridge. Asparagine 135 and asparagine 214 each carry an N-linked (GlcNAc...) asparagine glycan. The chain crosses the membrane as a helical span at residues 247 to 267 (VALSVVLPVLGLLILLGIWLI). Topologically, residues 268 to 566 (CKQKKSKEKL…ALKGLKVPSL (299 aa)) are cytoplasmic. Positions 311–509 (KLKRAAANAG…LIICTELQKS (199 aa)) constitute a B30.2/SPRY domain. Residue serine 509 is modified to Phosphoserine.

This sequence belongs to the immunoglobulin superfamily. BTN/MOG family. Glycosylated. In terms of tissue distribution, expressed in spleen and bone marrow.

It localises to the cell membrane. Its subcellular location is the cytoplasm. Possible role as a cell-adhesion or receptor molecule of erythroid cells. This chain is Erythroid membrane-associated protein (Ermap), found in Mus musculus (Mouse).